The primary structure comprises 94 residues: Large ribosomal subunit protein bL28A (94 aa).

A disordered region spans residues 63-94; sequence GHRGRRRAARAGSAPAHFARQAGSSLRTAAIL. Low complexity predominate over residues 72–82; sequence RAGSAPAHFAR. Residues 84–94 are compositionally biased toward polar residues; that stretch reads AGSSLRTAAIL.

It belongs to the bacterial ribosomal protein bL28 family.

The polypeptide is Large ribosomal subunit protein bL28A (rpmB1) (Mycobacterium bovis (strain ATCC BAA-935 / AF2122/97)).